A 408-amino-acid chain; its full sequence is UDP-N-acetylglucosamine--dolichyl-phosphate N-acetylglucosaminephosphotransferase (408 aa).

Residues 1 to 10 are Lumenal-facing; sequence MWAFPELPLP. Residues 11-38 traverse the membrane as a helical segment; it reads LLVNLFGSLLGFVATVTLIPAFRSHFIA. Residues 39–58 lie on the Cytoplasmic side of the membrane; sequence ARLCGQDLNKLSRQQIPESQ. UDP-N-acetyl-alpha-D-glucosamine is bound by residues 44–46 and Glu-56; that span reads QDL. Residues 59–78 traverse the membrane as a helical segment; that stretch reads GVICGAVFLIILFCFIPFPF. At 79–91 the chain is on the lumenal side; the sequence is LNCFVEEQCKAFP. The chain crosses the membrane as a helical span at residues 92–118; the sequence is HHEFVALIGALLAICCMIFLGFADDVL. Over 119–121 the chain is Cytoplasmic; sequence NLP. A helical membrane pass occupies residues 122 to 143; sequence WRHKLLLPTAASLPLLMVYFTN. A dolichyl phosphate-binding site is contributed by Lys-125. Residues 144–166 lie on the Lumenal side of the membrane; it reads FGNTTIVVPKPFRWILGLHLDLG. Asn-146 carries an N-linked (GlcNAc...) asparagine glycan. A helical transmembrane segment spans residues 167 to 186; the sequence is ILYYVYMGLLAVFCTNAINI. 178 to 186 is a binding site for dolichyl phosphate; it reads VFCTNAINI. Asn-185 provides a ligand contact to Mg(2+). Over 187 to 192 the chain is Cytoplasmic; that stretch reads LAGING. Asn-191 serves as a coordination point for UDP-N-acetyl-alpha-D-glucosamine. A helical membrane pass occupies residues 193 to 213; sequence LEAGQSLVISASIIVFNLVEL. At 214–218 the chain is on the lumenal side; the sequence is EGDYR. The helical transmembrane segment at 219-242 threads the bilayer; that stretch reads DDHVFSLYFMIPFFFTTLGLLYHN. At 243–250 the chain is on the cytoplasmic side; that stretch reads WYPSQVFV. The helical transmembrane segment at 251–269 threads the bilayer; the sequence is GDTFCYFAGMTFAVVGILG. Position 252 (Asp-252) interacts with Mg(2+). Residues 270–271 are Lumenal-facing; that stretch reads HF. The chain crosses the membrane as a helical span at residues 272–293; it reads SKTMLLFFIPQVFNFLYSLPQL. Residues 294–375 lie on the Cytoplasmic side of the membrane; it reads LHAIPCPRHR…LLLKIFGPIH (82 aa). 301–303 lines the UDP-N-acetyl-alpha-D-glucosamine pocket; sequence RHR. A helical transmembrane segment spans residues 376 to 400; that stretch reads ERNLTLLLLLLQILSSAVTFSIRYQ. At 401 to 408 the chain is on the lumenal side; the sequence is LVRLFYDV.

Belongs to the glycosyltransferase 4 family. Homodimer. Mg(2+) is required as a cofactor.

The protein resides in the endoplasmic reticulum membrane. It carries out the reaction a di-trans,poly-cis-dolichyl phosphate + UDP-N-acetyl-alpha-D-glucosamine = an N-acetyl-alpha-D-glucosaminyl-diphospho-di-trans,poly-cis-dolichol + UMP. The protein operates within protein modification; protein glycosylation. With respect to regulation, inhibited by natural nucleoside antibiotic tunicamycin, which acts as a structural analog and competitor of UDP-GlcNAc. Functionally, UDP-N-acetylglucosamine--dolichyl-phosphate N-acetylglucosaminephosphotransferase that operates in the biosynthetic pathway of dolichol-linked oligosaccharides, the glycan precursors employed in protein asparagine (N)-glycosylation. The assembly of dolichol-linked oligosaccharides begins on the cytosolic side of the endoplasmic reticulum membrane and finishes in its lumen. The sequential addition of sugars to dolichol pyrophosphate produces dolichol-linked oligosaccharides containing fourteen sugars, including two GlcNAcs, nine mannoses and three glucoses. Once assembled, the oligosaccharide is transferred from the lipid to nascent proteins by oligosaccharyltransferases. Catalyzes the initial step of dolichol-linked oligosaccharide biosynthesis, transfering GlcNAc-1-P from cytosolic UDP-GlcNAc onto the carrier lipid dolichyl phosphate (P-dolichol), yielding GlcNAc-P-P-dolichol embedded in the cytoplasmic leaflet of the endoplasmic reticulum membrane. In Cricetulus longicaudatus (Long-tailed dwarf hamster), this protein is UDP-N-acetylglucosamine--dolichyl-phosphate N-acetylglucosaminephosphotransferase (DPAGT1).